The chain runs to 555 residues: MVKRGKKTKYLFVTGGVVSSLGKGLAAASIGALLENRGLEVTHLKLDPYINVDPGTMSPFQHGEVYVTDDGAETDLDLGHYERFTSAKMTRKNNYTTGRIYSNVIQRERRGEYLGKTVQVIPHITDEIKAVIREAAGGVDILIVEVGGTVGDIESLPFLEAIRQMKYDVGEENAVYAHLTLVPFIAAAGELKTKPTQHSVKELREIGIQPDLLLCRSDREIAREMKDKIALFCNVDPSAVFTALDVKSIYEVPLSLHKEGLDDKLAELFNIWSRAPRLDKWEQIVQKVKAPKHGEVRVGVVGKYVELHESYKSLNEALVHGGIGADVRVKQVFIDSTKLEEGDLSELNQVDAILVPGGFGVRGTEGKILAVRHAREHKIPFFGICLGLQMAVIEFGRSVLGLERANSLEFDEQTPHPVVTLMEAQKAVADKGGTMRLGTYPCALKDGTKARELYGVDLVQERHRHRYEFNNAYRAQYEGAGMVFSGTNPELNLVEMIELNNHPHFVGCQFHPEFKSKPFAPHPLFAGFVHAAREQRDQQADRRAAVTKLPVGKNV.

The segment at 1–271 is amidoligase domain; it reads MVKRGKKTKY…DDKLAELFNI (271 aa). Ser19 contacts CTP. UTP is bound at residue Ser19. Residues 20–25 and Asp77 contribute to the ATP site; that span reads SLGKGL. Asp77 and Glu145 together coordinate Mg(2+). CTP-binding positions include 152–154, 192–197, and Lys228; these read DIE and KTKPTQ. UTP is bound by residues 192-197 and Lys228; that span reads KTKPTQ. Residues 297–538 enclose the Glutamine amidotransferase type-1 domain; that stretch reads RVGVVGKYVE…VHAAREQRDQ (242 aa). Gly358 provides a ligand contact to L-glutamine. Catalysis depends on Cys385, which acts as the Nucleophile; for glutamine hydrolysis. L-glutamine contacts are provided by residues 386-389, Glu409, and Arg466; that span reads LGLQ. Residues His511 and Glu513 contribute to the active site.

It belongs to the CTP synthase family. In terms of assembly, homotetramer.

The catalysed reaction is UTP + L-glutamine + ATP + H2O = CTP + L-glutamate + ADP + phosphate + 2 H(+). It carries out the reaction L-glutamine + H2O = L-glutamate + NH4(+). It catalyses the reaction UTP + NH4(+) + ATP = CTP + ADP + phosphate + 2 H(+). It functions in the pathway pyrimidine metabolism; CTP biosynthesis via de novo pathway; CTP from UDP: step 2/2. Allosterically activated by GTP, when glutamine is the substrate; GTP has no effect on the reaction when ammonia is the substrate. The allosteric effector GTP functions by stabilizing the protein conformation that binds the tetrahedral intermediate(s) formed during glutamine hydrolysis. Inhibited by the product CTP, via allosteric rather than competitive inhibition. Functionally, catalyzes the ATP-dependent amination of UTP to CTP with either L-glutamine or ammonia as the source of nitrogen. Regulates intracellular CTP levels through interactions with the four ribonucleotide triphosphates. In Anaeromyxobacter sp. (strain Fw109-5), this protein is CTP synthase.